Consider the following 142-residue polypeptide: Maximins y/Hw (142 aa).

Residues 1 to 18 form the signal peptide; sequence MIFKYIVAVSFLIASGYA. A propeptide spanning residues 19–43 is cleaved from the precursor; it reads RSVKNDEQSLSQREVLEEESLREIR. Phenylalanine amide is present on Phe-68. Residues 72-121 constitute a propeptide that is removed on maturation; that stretch reads TAEDHEVMKRLEAVIRDLDSLDHSEEASERETRGFNQEEIANLFTKKEKR. Ile-141 bears the Isoleucine amide mark.

It belongs to the bombinin family. As to expression, expressed by the skin glands.

Its subcellular location is the secreted. Maximin-y shows antimicrobial activity against bacteria and against the fungus C.albicans. It has little hemolytic activity. Functionally, maximin-Hw shows antimicrobial activity against bacteria and against the fungus C.albicans. Shows strong hemolytic activity. This is Maximins y/Hw from Bombina maxima (Giant fire-bellied toad).